The following is a 923-amino-acid chain: DNA gyrase subunit A (923 aa).

In terms of domain architecture, Topo IIA-type catalytic spans 34–534; it reads LPDARDGLKP…SQVDLTIADL (501 aa). Catalysis depends on Tyr-122, which acts as the O-(5'-phospho-DNA)-tyrosine intermediate. Positions 561-567 match the GyrA-box motif; the sequence is QRRGGKG. The segment at 881–923 is disordered; the sequence is ERVQEPSGGDDEDLPEGEEAAESLGESAESESEPAAEAEGNEE. Composition is skewed to acidic residues over residues 888–901 and 908–923; these read GGDD…EEAA and AESE…GNEE.

The protein belongs to the type II topoisomerase GyrA/ParC subunit family. Heterotetramer, composed of two GyrA and two GyrB chains. In the heterotetramer, GyrA contains the active site tyrosine that forms a transient covalent intermediate with DNA, while GyrB binds cofactors and catalyzes ATP hydrolysis.

The protein localises to the cytoplasm. The enzyme catalyses ATP-dependent breakage, passage and rejoining of double-stranded DNA.. In terms of biological role, a type II topoisomerase that negatively supercoils closed circular double-stranded (ds) DNA in an ATP-dependent manner to modulate DNA topology and maintain chromosomes in an underwound state. Negative supercoiling favors strand separation, and DNA replication, transcription, recombination and repair, all of which involve strand separation. Also able to catalyze the interconversion of other topological isomers of dsDNA rings, including catenanes and knotted rings. Type II topoisomerases break and join 2 DNA strands simultaneously in an ATP-dependent manner. The protein is DNA gyrase subunit A of Pseudomonas aeruginosa (strain ATCC 15692 / DSM 22644 / CIP 104116 / JCM 14847 / LMG 12228 / 1C / PRS 101 / PAO1).